Here is a 623-residue protein sequence, read N- to C-terminus: Chaperone protein HtpG (623 aa).

The a; substrate-binding stretch occupies residues 1-330 (MIMTQEKKKF…SEDLPLNISR (330 aa)). A b region spans residues 331 to 546 (ESLQHNSVLE…DAAMDIRMER (216 aa)). Residues 477 to 497 (SDIDVEQTTSQSEEKNTDSKK) are disordered. Over residues 488–497 (SEEKNTDSKK) the composition is skewed to basic and acidic residues. A c region spans residues 547-623 (FLIEQKQIAN…LNDIVQKAIL (77 aa)).

It belongs to the heat shock protein 90 family. In terms of assembly, homodimer.

It localises to the cytoplasm. In terms of biological role, molecular chaperone. Has ATPase activity. The protein is Chaperone protein HtpG of Rickettsia massiliae (strain Mtu5).